Reading from the N-terminus, the 390-residue chain is MAFDLAARLAERRAADLYRQRPLLESPQGPEVVVDGQRLLAFCSNDYLGLANHPEVITAWQAGAERWGVGGGASHLVVGHSTPHHQVEEALAELTGRPRALLFSTGYMANLGAITALVGQGDTVLQDRLNHASLLDGGLLSGARFNRYLHNDPASLASRLDKAVGNTLVVTDGVFSMDGDLADLPALADVARARGAWLMVDDAHGLGTLGTQGGGIVEHFGLGVDDVPVLIGTLGKACGTAGAFVAGSEALIEALVQFARPYIYTTSQPPALACATLKSLELLRRETWRREHLAALIRQFREGAQQMGLQLMDSPTPIQPIVIGDSAQALRLSRLLRERGLLVTAIRPPTVPAGSARLRVTLSAAHSEAQVQLLLNALAECYPQLENADA.

Arg19 serves as a coordination point for substrate. 106–107 (GY) provides a ligand contact to pyridoxal 5'-phosphate. Residue His131 coordinates substrate. Ser176, His204, and Thr233 together coordinate pyridoxal 5'-phosphate. N6-(pyridoxal phosphate)lysine is present on Lys236. Residue Thr350 coordinates substrate.

The protein belongs to the class-II pyridoxal-phosphate-dependent aminotransferase family. BioF subfamily. As to quaternary structure, homodimer. The cofactor is pyridoxal 5'-phosphate.

It catalyses the reaction 6-carboxyhexanoyl-[ACP] + L-alanine + H(+) = (8S)-8-amino-7-oxononanoate + holo-[ACP] + CO2. Its pathway is cofactor biosynthesis; biotin biosynthesis. In terms of biological role, catalyzes the decarboxylative condensation of pimeloyl-[acyl-carrier protein] and L-alanine to produce 8-amino-7-oxononanoate (AON), [acyl-carrier protein], and carbon dioxide. The polypeptide is 8-amino-7-oxononanoate synthase (Pseudomonas putida (strain ATCC 700007 / DSM 6899 / JCM 31910 / BCRC 17059 / LMG 24140 / F1)).